Consider the following 165-residue polypeptide: Disulfide bond formation protein B (165 aa).

The Cytoplasmic segment spans residues M1 to I10. A helical transmembrane segment spans residues Y11–Y27. The Periplasmic portion of the chain corresponds to L28 to I45. C37 and C40 are oxidised to a cystine. A helical membrane pass occupies residues A46–P62. At K63–T68 the chain is on the cytoplasmic side. A helical transmembrane segment spans residues V69–T86. The Periplasmic portion of the chain corresponds to R87–G143. A disulfide bridge links C102 with C129. A helical transmembrane segment spans residues W144–R162. At R163–R165 the chain is on the cytoplasmic side.

It belongs to the DsbB family.

It is found in the cell inner membrane. Functionally, required for disulfide bond formation in some periplasmic proteins. Acts by oxidizing the DsbA protein. In Hahella chejuensis (strain KCTC 2396), this protein is Disulfide bond formation protein B.